Reading from the N-terminus, the 597-residue chain is Elongation factor 4 (597 aa).

One can recognise a tr-type G domain in the interval 2 to 184; it reads DHIRNFSIIA…ALIAKVPPPK (183 aa). GTP-binding positions include 14 to 19 and 131 to 134; these read DHGKST and NKID.

It belongs to the TRAFAC class translation factor GTPase superfamily. Classic translation factor GTPase family. LepA subfamily.

The protein resides in the cell inner membrane. The catalysed reaction is GTP + H2O = GDP + phosphate + H(+). Functionally, required for accurate and efficient protein synthesis under certain stress conditions. May act as a fidelity factor of the translation reaction, by catalyzing a one-codon backward translocation of tRNAs on improperly translocated ribosomes. Back-translocation proceeds from a post-translocation (POST) complex to a pre-translocation (PRE) complex, thus giving elongation factor G a second chance to translocate the tRNAs correctly. Binds to ribosomes in a GTP-dependent manner. This chain is Elongation factor 4, found in Cupriavidus taiwanensis (strain DSM 17343 / BCRC 17206 / CCUG 44338 / CIP 107171 / LMG 19424 / R1) (Ralstonia taiwanensis (strain LMG 19424)).